The sequence spans 215 residues: Histone H1.1 (215 aa).

The interval 1–43 (MSETVPPAPAASAAPEKPLAGKKAKKPAKAAAASKKKPAGPSV) is disordered. N-acetylserine is present on Ser2. Phosphoserine occurs at positions 2 and 12. Lys17 carries the N6-acetyllysine modification. The span at 20–38 (AGKKAKKPAKAAAASKKKP) shows a compositional bias: basic residues. The residue at position 37 (Lys37) is an N6-(beta-hydroxybutyryl)lysine. One can recognise an H15 domain in the interval 39 to 112 (AGPSVSELIV…GASGSFKLNK (74 aa)). A Phosphoserine modification is found at Ser44. Lys55 bears the N6-(beta-hydroxybutyryl)lysine mark. Arg57 carries the citrulline modification. Lys67 is subject to N6-(beta-hydroxybutyryl)lysine. Lys78 is modified (N6-acetyllysine). The residue at position 88 (Lys88) is an N6-(beta-hydroxybutyryl)lysine. At Lys93 the chain carries N6-(beta-hydroxybutyryl)lysine; alternate. Lys93 carries the post-translational modification N6-acetyllysine; alternate. A disordered region spans residues 94–215 (GTLVQTKGTG…KPKKAAPKKK (122 aa)). Ser107 is subject to Phosphoserine. N6-(beta-hydroxybutyryl)lysine is present on Lys109. The segment covering 122–147 (GASKVATKTKATGASKKLKKATGASK) has biased composition (low complexity). N6-acetyllysine is present on Lys125. Composition is skewed to basic residues over residues 148–181 (KSVK…KKVA) and 188–215 (KAVK…PKKK). Residue Thr204 is modified to Phosphothreonine.

Belongs to the histone H1/H5 family. Interacts with DFFB. In terms of processing, H1 histones are progressively phosphorylated during the cell cycle, becoming maximally phosphorylated during late G2 phase and M phase, and being dephosphorylated sharply thereafter. Citrullination at Arg-57 (H1R54ci) by PADI4 takes place within the DNA-binding site of H1 and results in its displacement from chromatin and global chromatin decondensation, thereby promoting pluripotency and stem cell maintenance.

It localises to the nucleus. The protein localises to the chromosome. Histone H1 protein binds to linker DNA between nucleosomes forming the macromolecular structure known as the chromatin fiber. Histones H1 are necessary for the condensation of nucleosome chains into higher-order structured fibers. Also acts as a regulator of individual gene transcription through chromatin remodeling, nucleosome spacing and DNA methylation. The polypeptide is Histone H1.1 (Homo sapiens (Human)).